The primary structure comprises 450 residues: F-box/FBD/LRR-repeat protein At5g22660 (450 aa).

The F-box domain occupies 12-58 (EDRISSLPDHLLSQILSNLPTENAVTTSILSTRWKDLWLSTPVLDID). LRR repeat units lie at residues 157 to 181 (LPNLKVMHLEENIYSYAETMEKFIS) and 294 to 317 (LSSLRDMTISGTTLKIICHYLKHE). In terms of domain architecture, FBD spans 364 to 416 (EEISLSSSVPKCLQSSLENVEIIRPNYGSGEEMKLSKYFLENSLVLKKFKLCR).

This chain is F-box/FBD/LRR-repeat protein At5g22660, found in Arabidopsis thaliana (Mouse-ear cress).